The sequence spans 212 residues: Penicillin-binding protein activator LpoB (212 aa).

The first 19 residues, 1–19 (MTKMHRYAAIAALAIFLSG), serve as a signal peptide directing secretion. The N-palmitoyl cysteine moiety is linked to residue Cys20. The S-diacylglycerol cysteine moiety is linked to residue Cys20. The segment at 28-73 (PVEEVKPAPEQPAQPPQPPVVPSVPTIPQQPGPIEHEDQTGQPAPK) is disordered. Residues 36-49 (PEQPAQPPQPPVVP) are compositionally biased toward pro residues.

This sequence belongs to the LpoB family. Interacts with PBP1b.

Its subcellular location is the cell outer membrane. In terms of biological role, regulator of peptidoglycan synthesis that is essential for the function of penicillin-binding protein 1B (PBP1b). This chain is Penicillin-binding protein activator LpoB, found in Salmonella typhimurium (strain LT2 / SGSC1412 / ATCC 700720).